A 365-amino-acid chain; its full sequence is UDP-N-acetylglucosamine--N-acetylmuramyl-(pentapeptide) pyrophosphoryl-undecaprenol N-acetylglucosamine transferase (365 aa).

UDP-N-acetyl-alpha-D-glucosamine contacts are provided by residues 17 to 19 (TGG), Asn129, Arg167, Ser194, Ile250, 269 to 274 (ALTVSE), and Gln295.

It belongs to the glycosyltransferase 28 family. MurG subfamily.

The protein localises to the cell inner membrane. It catalyses the reaction di-trans,octa-cis-undecaprenyl diphospho-N-acetyl-alpha-D-muramoyl-L-alanyl-D-glutamyl-meso-2,6-diaminopimeloyl-D-alanyl-D-alanine + UDP-N-acetyl-alpha-D-glucosamine = di-trans,octa-cis-undecaprenyl diphospho-[N-acetyl-alpha-D-glucosaminyl-(1-&gt;4)]-N-acetyl-alpha-D-muramoyl-L-alanyl-D-glutamyl-meso-2,6-diaminopimeloyl-D-alanyl-D-alanine + UDP + H(+). The protein operates within cell wall biogenesis; peptidoglycan biosynthesis. In terms of biological role, cell wall formation. Catalyzes the transfer of a GlcNAc subunit on undecaprenyl-pyrophosphoryl-MurNAc-pentapeptide (lipid intermediate I) to form undecaprenyl-pyrophosphoryl-MurNAc-(pentapeptide)GlcNAc (lipid intermediate II). The protein is UDP-N-acetylglucosamine--N-acetylmuramyl-(pentapeptide) pyrophosphoryl-undecaprenol N-acetylglucosamine transferase of Shewanella halifaxensis (strain HAW-EB4).